The chain runs to 515 residues: Maturase K (515 aa).

This sequence belongs to the intron maturase 2 family. MatK subfamily.

It is found in the plastid. The protein localises to the chloroplast. Functionally, usually encoded in the trnK tRNA gene intron. Probably assists in splicing its own and other chloroplast group II introns. The protein is Maturase K of Pinus contorta (Shore pine).